Consider the following 714-residue polypeptide: Neutral ceramidase A (714 aa).

The first 23 residues, 1-23, serve as a signal peptide directing secretion; that stretch reads MKRSIVFIYSLVILLLSVGFIDA. N218 and N246 each carry an N-linked (GlcNAc...) asparagine glycan. The active-site Nucleophile is S293. N-linked (GlcNAc...) asparagine glycosylation is found at N353, N373, N416, N571, N610, and N700.

The protein belongs to the neutral ceramidase family.

It localises to the secreted. It carries out the reaction an N-acylsphing-4-enine + H2O = sphing-4-enine + a fatty acid. Hydrolyzes the sphingolipid ceramide into sphingosine and free fatty acid at an optimal pH of 3.0. Has no activity toward glycosphingolipids, such as GalCer and Galbeta1-3GalNAcbeta1-4(NeuAcalpha2-3)Galbeta1-4Glcbeta1-1'Cer or sphingomyelin. The chain is Neutral ceramidase A (dcd2A) from Dictyostelium discoideum (Social amoeba).